We begin with the raw amino-acid sequence, 251 residues long: Triosephosphate isomerase (251 aa).

Residue 9–11 (NWK) participates in substrate binding. His95 acts as the Electrophile in catalysis. The active-site Proton acceptor is the Glu167. Substrate-binding positions include Gly173, Ser212, and 233–234 (GG).

Belongs to the triosephosphate isomerase family. In terms of assembly, homodimer.

The protein localises to the cytoplasm. The catalysed reaction is D-glyceraldehyde 3-phosphate = dihydroxyacetone phosphate. The protein operates within carbohydrate biosynthesis; gluconeogenesis. Its pathway is carbohydrate degradation; glycolysis; D-glyceraldehyde 3-phosphate from glycerone phosphate: step 1/1. In terms of biological role, involved in the gluconeogenesis. Catalyzes stereospecifically the conversion of dihydroxyacetone phosphate (DHAP) to D-glyceraldehyde-3-phosphate (G3P). The polypeptide is Triosephosphate isomerase (Ectopseudomonas mendocina (strain ymp) (Pseudomonas mendocina)).